A 42-amino-acid chain; its full sequence is Fungal defensin eurocin (42 aa).

Beta-D-GlcNAc-(1-&gt;4)-Mur2Ac(oyl-L-Ala-gamma-D-Glu-L-Lys-D-Ala-D-Ala)-di-trans,octa-cis-undecaprenyl diphosphate is bound by residues F2, G3, C4, and H14. Cystine bridges form between C4–C27, C11–C38, and C15–C40. Residues 31–35 (WYLGH) are interaction site with membranes lipids. Position 38 (C38) interacts with beta-D-GlcNAc-(1-&gt;4)-Mur2Ac(oyl-L-Ala-gamma-D-Glu-L-Lys-D-Ala-D-Ala)-di-trans,octa-cis-undecaprenyl diphosphate.

This sequence belongs to the invertebrate defensin family.

It localises to the secreted. The protein resides in the target cell membrane. In terms of biological role, antimicrobial peptide that acts against Gram-positive bacteria but not against Gram-negative bacteria. It selectively inhibits peptidoglycan biosynthesis through complex formation with the cell wall precursor lipid II (1:1 molar ratio) thus inhibiting cell wall synthesis. It does not disrupt cell membranes. In vivo, is effective against an intraperitoneal infection with S.pneumoniae. In vitro, it shows very low hemolytic and cytolytic activities. The polypeptide is Fungal defensin eurocin (Aspergillus amstelodami).